A 63-amino-acid chain; its full sequence is MVFQLICSTCGRDISEERFALLIKKIALKTVLKGVKNSCCRLKLSTQIEPQRNLTVEPLLDIN.

This sequence belongs to the poxviridae DNA-directed RNA polymerase 7 kDa subunit family. As to quaternary structure, the DNA-dependent RNA polymerase used for intermediate and late genes expression consists of eight subunits 147 kDa, 133 kDa, 35 kDa, 30 kDa, 22 kDa, 19 kDa, 18 kDa and 7 kDa totalling more than 500 kDa in mass. The same holoenzyme, with the addition of the transcription-specificity factor RAP94, is used for early gene expression.

It localises to the virion. The catalysed reaction is RNA(n) + a ribonucleoside 5'-triphosphate = RNA(n+1) + diphosphate. Part of the DNA-dependent RNA polymerase which catalyzes the transcription of viral DNA into RNA using the four ribonucleoside triphosphates as substrates. Responsible for the transcription of early, intermediate and late genes. DNA-dependent RNA polymerase associates with the early transcription factor (ETF) thereby allowing the early genes transcription. Late transcription, and probably also intermediate transcription, require newly synthesized RNA polymerase. The sequence is that of DNA-directed RNA polymerase 7 kDa subunit (RPO7) from Rabbit fibroma virus (strain Kasza) (RFV).